We begin with the raw amino-acid sequence, 336 residues long: Foldase protein PrsA (336 aa).

An N-terminal signal peptide occupies residues 1-22 (MKSAKKLLSVLCLGIFILTFTA). The N-palmitoyl cysteine moiety is linked to residue C23. C23 carries S-diacylglycerol cysteine lipidation. The PpiC domain maps to 194–286 (PNTMNVSHIL…FGYHIIKINS (93 aa)).

This sequence belongs to the PrsA family.

It is found in the cell membrane. It carries out the reaction [protein]-peptidylproline (omega=180) = [protein]-peptidylproline (omega=0). In terms of biological role, plays a major role in protein secretion by helping the post-translocational extracellular folding of several secreted proteins. The protein is Foldase protein PrsA of Clostridium botulinum (strain Kyoto / Type A2).